The sequence spans 1105 residues: Tubulin-folding cofactor D (1105 aa).

Asparagine 122 and asparagine 126 each carry an N-linked (GlcNAc...) asparagine glycan. HEAT repeat units follow at residues isoleucine 308–tryptophan 345, leucine 347–alanine 385, serine 401–lysine 446, and leucine 452–serine 489. The N-linked (GlcNAc...) asparagine glycan is linked to asparagine 373. Residues asparagine 721, asparagine 883, and asparagine 1083 are each glycosylated (N-linked (GlcNAc...) asparagine).

Interacts with alp21.

It localises to the cytoplasm. The protein resides in the cytoskeleton. Has a function in the folding of beta-tubulin. Microtubule-associated protein that is essential to direct polarized cell growth and to position the nucleus and septum to the center of the cell during mitosis. The protein is Tubulin-folding cofactor D (alp1) of Schizosaccharomyces pombe (strain 972 / ATCC 24843) (Fission yeast).